The following is a 92-amino-acid chain: Bombyxin A-4 (92 aa).

The first 19 residues, 1 to 19 (MKILLAIALMLSTVMWVST), serve as a signal peptide directing secretion. The residue at position 20 (glutamine 20) is a Pyrrolidone carboxylic acid. Disulfide bonds link cysteine 29/cysteine 79, cysteine 41/cysteine 92, and cysteine 78/cysteine 83. Residues 50-70 (SGAQFASYGSAWLMPYSEGRG) constitute a propeptide, c peptide like.

It belongs to the insulin family. As to quaternary structure, heterodimer of a B chain and an A chain linked by two disulfide bonds.

It is found in the secreted. Brain peptide responsible for activation of prothoracic glands to produce ecdysone in insects. In Bombyx mori (Silk moth), this protein is Bombyxin A-4 (BBXA4).